The primary structure comprises 230 residues: Fibrillarin-like rRNA/tRNA 2'-O-methyltransferase (230 aa).

S-adenosyl-L-methionine contacts are provided by residues 87 to 88 (TT), 105 to 106 (EF), 130 to 131 (DA), and 150 to 153 (DVAQ).

Belongs to the methyltransferase superfamily. Fibrillarin family. Interacts with nop5. Component of box C/D small ribonucleoprotein (sRNP) particles that contain rpl7ae, FlpA and nop5, plus a guide RNA.

Functionally, involved in pre-rRNA and tRNA processing. Utilizes the methyl donor S-adenosyl-L-methionine to catalyze the site-specific 2'-hydroxyl methylation of ribose moieties in rRNA and tRNA. Site specificity is provided by a guide RNA that base pairs with the substrate. Methylation occurs at a characteristic distance from the sequence involved in base pairing with the guide RNA. In Methanococcus maripaludis (strain C6 / ATCC BAA-1332), this protein is Fibrillarin-like rRNA/tRNA 2'-O-methyltransferase.